We begin with the raw amino-acid sequence, 684 residues long: Proprotein convertase subtilisin/kexin type 9 (684 aa).

The signal sequence occupies residues 1 to 28 (MGTVSSRRLWWPLPLLLLLLLGPPGARA). Residues 29–151 (QEDDDGDYEE…IEEDSSVFAQ (123 aa)) constitute a propeptide that is removed on maturation. Tyrosine 36 bears the Sulfotyrosine mark. At serine 45 the chain carries Phosphoserine. An Inhibitor I9 domain is found at 75 to 148 (TYVVVLKDSD…VDYIEEDSSV (74 aa)). Residues 154 to 460 (PWNLERITPA…GWQLFCRTVW (307 aa)) enclose the Peptidase S8 domain. Active-site charge relay system residues include aspartate 185 and histidine 225. 2 disulfide bridges follow: cysteine 222/cysteine 254 and cysteine 322/cysteine 357. The Charge relay system role is filled by serine 385. Residues 451–684 (GWQLFCRTVW…AICCRSRHLA (234 aa)) form a C-terminal domain region. Cystine bridges form between cysteine 456-cysteine 526, cysteine 476-cysteine 525, and cysteine 485-cysteine 508. An N-linked (GlcNAc...) asparagine glycan is attached at asparagine 532. Cystine bridges form between cysteine 533-cysteine 600, cysteine 551-cysteine 599, cysteine 561-cysteine 587, cysteine 607-cysteine 678, cysteine 625-cysteine 677, and cysteine 634-cysteine 653.

This sequence belongs to the peptidase S8 family. As to quaternary structure, monomer. Can self-associate to form dimers and higher multimers which may have increased LDLR degrading activity. The precursor protein but not the mature protein may form multimers. Interacts with APOB, VLDLR, LRP8/APOER2 and BACE1. The full-length immature form (pro-PCSK9) interacts with SCNN1A, SCNN1B and SCNN1G. The pro-PCSK9 form (via C-terminal domain) interacts with LDLR. Interacts (via the C-terminal domain) with ANXA2 (via repeat Annexin 1); the interaction inhibits the degradation of LDLR. The cofactor is Ca(2+). Post-translationally, cleavage by furin and PCSK5 generates a truncated inactive protein that is unable to induce LDLR degradation. Undergoes autocatalytic cleavage in the endoplasmic reticulum to release the propeptide from the N-terminus and the cleavage of the propeptide is strictly required for its maturation and activation. The cleaved propeptide however remains associated with the catalytic domain through non-covalent interactions, preventing potential substrates from accessing its active site. As a result, it is secreted from cells as a propeptide-containing, enzymatically inactive protein. In terms of processing, phosphorylation protects the propeptide against proteolysis.

The protein localises to the cytoplasm. It is found in the secreted. Its subcellular location is the endosome. It localises to the lysosome. The protein resides in the cell surface. The protein localises to the endoplasmic reticulum. It is found in the golgi apparatus. Its proteolytic activity is autoinhibited by the non-covalent binding of the propeptide to the catalytic domain. Inhibited by EGTA. Its function is as follows. Crucial player in the regulation of plasma cholesterol homeostasis. Binds to low-density lipid receptor family members: low density lipoprotein receptor (LDLR), very low density lipoprotein receptor (VLDLR), apolipoprotein E receptor (LRP1/APOER) and apolipoprotein receptor 2 (LRP8/APOER2), and promotes their degradation in intracellular acidic compartments. Acts via a non-proteolytic mechanism to enhance the degradation of the hepatic LDLR through a clathrin LDLRAP1/ARH-mediated pathway. May prevent the recycling of LDLR from endosomes to the cell surface or direct it to lysosomes for degradation. Can induce ubiquitination of LDLR leading to its subsequent degradation. Inhibits intracellular degradation of APOB via the autophagosome/lysosome pathway in a LDLR-independent manner. Involved in the disposal of non-acetylated intermediates of BACE1 in the early secretory pathway. Inhibits epithelial Na(+) channel (ENaC)-mediated Na(+) absorption by reducing ENaC surface expression primarily by increasing its proteasomal degradation. Regulates neuronal apoptosis via modulation of LRP8/APOER2 levels and related anti-apoptotic signaling pathways. This Plecturocebus moloch (Dusky titi monkey) protein is Proprotein convertase subtilisin/kexin type 9 (PCSK9).